The chain runs to 431 residues: Mothers against decapentaplegic homolog 6 (431 aa).

The segment covering 1 to 15 (MFRSKRSGLVRRLWR) has biased composition (basic residues). The tract at residues 1 to 95 (MFRSKRSGLV…SPPGPGGGEA (95 aa)) is disordered. Over residues 29-38 (GQSSERNATA) the composition is skewed to polar residues. Over residues 71 to 90 (PELPPPPPPPPPGGASPPGP) the composition is skewed to pro residues. In terms of domain architecture, MH1 spans 85-209 (ASPPGPGGGE…FSRLCGPESP (125 aa)). Residues C139, C182, C194, and H199 each coordinate Zn(2+). Residues 235–245 (TETEATNSPNV) show a composition bias toward polar residues. The disordered stretch occupies residues 235-258 (TETEATNSPNVTPGEFSDASTSPD). Residues 265–431 (WCNVAYWEHR…WLEILLSNNR (167 aa)) form the MH2 domain.

Belongs to the dwarfin/SMAD family. As to expression, developing heart, eyes and limbs.

The protein localises to the nucleus. Transforming growth factor-beta superfamily receptors signaling occurs through the Smad family of intracellular mediators. SMAD6 is an inhibitory Smad (i-Smad) that negatively regulates signaling downstream of type I transforming growth factor-beta. Acts as a mediator of TGF-beta and BMP anti-inflammatory activities. Suppresses IL1R-TLR signaling through its direct interaction with PEL1, preventing NF-kappa-B activation, nuclear transport and NF-kappa-B-mediated expression of pro-inflammatory genes. Blocks the BMP-SMAD1 signaling pathway by competing with SMAD4 for receptor-activated SMAD1-binding. Binds to regulatory elements in target promoter regions. In Gallus gallus (Chicken), this protein is Mothers against decapentaplegic homolog 6 (SMAD6).